We begin with the raw amino-acid sequence, 306 residues long: Pyridoxal 5'-phosphate synthase subunit PdxS (306 aa).

Aspartate 36 lines the D-ribose 5-phosphate pocket. The active-site Schiff-base intermediate with D-ribose 5-phosphate is the lysine 93. Residue glycine 165 coordinates D-ribose 5-phosphate. Arginine 177 lines the D-glyceraldehyde 3-phosphate pocket. Residues glycine 226 and 247-248 (GS) contribute to the D-ribose 5-phosphate site.

It belongs to the PdxS/SNZ family. In terms of assembly, in the presence of PdxT, forms a dodecamer of heterodimers.

The enzyme catalyses aldehydo-D-ribose 5-phosphate + D-glyceraldehyde 3-phosphate + L-glutamine = pyridoxal 5'-phosphate + L-glutamate + phosphate + 3 H2O + H(+). Its pathway is cofactor biosynthesis; pyridoxal 5'-phosphate biosynthesis. Catalyzes the formation of pyridoxal 5'-phosphate from ribose 5-phosphate (RBP), glyceraldehyde 3-phosphate (G3P) and ammonia. The ammonia is provided by the PdxT subunit. Can also use ribulose 5-phosphate and dihydroxyacetone phosphate as substrates, resulting from enzyme-catalyzed isomerization of RBP and G3P, respectively. This Salinispora arenicola (strain CNS-205) protein is Pyridoxal 5'-phosphate synthase subunit PdxS.